A 492-amino-acid chain; its full sequence is Glutamyl-tRNA(Gln) amidotransferase subunit A (492 aa).

Catalysis depends on charge relay system residues Lys-81 and Ser-156. The Acyl-ester intermediate role is filled by Ser-180.

It belongs to the amidase family. GatA subfamily. As to quaternary structure, heterotrimer of A, B and C subunits.

It catalyses the reaction L-glutamyl-tRNA(Gln) + L-glutamine + ATP + H2O = L-glutaminyl-tRNA(Gln) + L-glutamate + ADP + phosphate + H(+). Functionally, allows the formation of correctly charged Gln-tRNA(Gln) through the transamidation of misacylated Glu-tRNA(Gln) in organisms which lack glutaminyl-tRNA synthetase. The reaction takes place in the presence of glutamine and ATP through an activated gamma-phospho-Glu-tRNA(Gln). In Rhodococcus erythropolis (strain PR4 / NBRC 100887), this protein is Glutamyl-tRNA(Gln) amidotransferase subunit A.